The chain runs to 320 residues: ATP-dependent 6-phosphofructokinase (320 aa).

Position 12 (Gly-12) interacts with ATP. ADP is bound by residues 22 to 26 (RGVVR) and 55 to 60 (RYSVSD). ATP contacts are provided by residues 73–74 (RF) and 103–106 (GDGS). Position 104 (Asp-104) interacts with Mg(2+). Substrate is bound at residue 126–128 (TID). The active-site Proton acceptor is Asp-128. An ADP-binding site is contributed by Arg-155. Substrate is bound by residues Arg-163 and 170–172 (MGR). ADP contacts are provided by residues 186–188 (GCE), Lys-212, and 214–216 (KKH). Residues Glu-223, Arg-244, and 250-253 (HIQR) contribute to the substrate site.

It belongs to the phosphofructokinase type A (PFKA) family. ATP-dependent PFK group I subfamily. Prokaryotic clade 'B1' sub-subfamily. In terms of assembly, homotetramer. Mg(2+) is required as a cofactor.

It localises to the cytoplasm. It catalyses the reaction beta-D-fructose 6-phosphate + ATP = beta-D-fructose 1,6-bisphosphate + ADP + H(+). Its pathway is carbohydrate degradation; glycolysis; D-glyceraldehyde 3-phosphate and glycerone phosphate from D-glucose: step 3/4. With respect to regulation, allosterically activated by ADP and other diphosphonucleosides, and allosterically inhibited by phosphoenolpyruvate. Its function is as follows. Catalyzes the phosphorylation of D-fructose 6-phosphate to fructose 1,6-bisphosphate by ATP, the first committing step of glycolysis. In Pectobacterium carotovorum subsp. carotovorum (strain PC1), this protein is ATP-dependent 6-phosphofructokinase.